A 400-amino-acid chain; its full sequence is MNEFEDLLNSVSQVETGDVVSAEVLTVDATQANVAISGTGVEGVLTLRELTNDRDADINDFVKVGEVLDVLVLRQVVGKDTDTVTYLVSKKRLEARKAWDKLVGREEEVVTVKGTRAVKGGLSVEFEGVRGFIPASMLDTRFVRNAERFVGQEFDTKIKEVNAKENRFILSRREVVEAATAAARAEVFGKLAVGDVVTGKVARITSFGAFIDLGGVDGLVHLTELSHERNVSPKSVVTVGEEIEVKILDLNEEEGRVSLSLKATVPGPWDGVEQKLAKGDVVEGTVKRLTDFGAFVEVLPGIDGLVHVSQISHKRIENPKEALKVGQEVQVKVLEVNADAERVSLSIKALEERPAQEEGQKEEKRAARPRRPRRQEKRDFELPETQTGFSMADLFGDIEL.

4 consecutive S1 motif domains span residues 17 to 87 (GDVV…VTYL), 107 to 173 (EEVV…LSRR), 194 to 262 (GDVV…LSLK), and 279 to 348 (GDVV…LSIK). A compositionally biased stretch (basic and acidic residues) spans 351–366 (EERPAQEEGQKEEKRA). A disordered region spans residues 351-400 (EERPAQEEGQKEEKRAARPRRPRRQEKRDFELPETQTGFSMADLFGDIEL).

It belongs to the bacterial ribosomal protein bS1 family. In terms of processing, phosphorylated.

Its function is as follows. Binds mRNA; thus facilitating recognition of the initiation point. It is needed to translate mRNA with a short Shine-Dalgarno (SD) purine-rich sequence. This is Small ribosomal subunit protein bS1 (rpsA) from Streptococcus pneumoniae (strain ATCC BAA-255 / R6).